The following is a 526-amino-acid chain: Amino acid transporter heavy chain SLC3A2 (526 aa).

The disordered stretch occupies residues Met1–Ala31. At Met1–Arg75 the chain is on the cytoplasmic side. Ser2 is subject to Phosphoserine. Position 5 is a phosphothreonine (Thr5). Over residues Val7–Lys21 the composition is skewed to basic and acidic residues. Residue Lys42 forms a Glycyl lysine isopeptide (Lys-Gly) (interchain with G-Cter in ubiquitin) linkage. Ser58 is modified (phosphoserine). Residue Lys59 forms a Glycyl lysine isopeptide (Lys-Gly) (interchain with G-Cter in SUMO2) linkage. The chain crosses the membrane as a helical; Signal-anchor for type II membrane protein span at residues Trp76–Arg99. Residues Ala100–Ala526 are Extracellular-facing. N-linked (GlcNAc...) asparagine glycans are attached at residues Asn166, Asn259, and Asn263. Ser300 is modified (phosphoserine). Residue Asn301 is glycosylated (N-linked (GlcNAc...) asparagine). Ser302 is modified (phosphoserine). N-linked (GlcNAc...) asparagine glycosylation is found at Asn318, Asn385, and Asn399. Phosphoserine is present on Ser420. A glycan (N-linked (GlcNAc...) asparagine) is linked at Asn509.

This sequence belongs to the SLC3A transporter family. Disulfide-linked heterodimer with a non-glycosylated light chain (SLC7A5, SLC7A6, SLC7A7, SLC7A8, SLC7A10 or SLC7A11). Interacts with TLCD3A/CT120 and ICAM1. Constitutively and specifically associates with beta-1 integrins (alpha-2/beta-1, alpha-3/beta-1, alpha-5/beta-1 and alpha-6/beta-1), but minimally with alpha-4/beta-1. Interacts with LAPTM4B; recruits SLC3A2 and SLC7A5 to lysosomes to promote leucine uptake into these organelles and is required for mTORC1 activation. Phosphorylation on Ser-300 or Ser-302 and on Ser-420 by ecto-protein kinases favors heterotypic cell-cell interactions. Post-translationally, N-glycosylated; N-glycosylation is crucial for trafficking and stability of SLC3A2 to the plasma membrane. As to expression, detected on the surface of embryonic epithelial cells in the epidermis, thymus, kidney, intestine, brain choroid plexus, and in retina. Detected in adult and embryonic brain, spleen, kidney, intestine and liver, and in adult testis (at protein level). Observed in all adult tissues tested with strongest expression in kidney, small intestine, spleen, thymus and liver. Moderate expression in brain, stomach, heart, testis, lung, skin, pancreas and skeletal muscle. In brain expressed on capillary endothelia in cerebral cortex.

The protein localises to the apical cell membrane. The protein resides in the cell membrane. Its subcellular location is the cell junction. It localises to the lysosome membrane. It is found in the melanosome. The protein localises to the basolateral cell membrane. Functionally, acts as a chaperone that facilitates biogenesis and trafficking of functional transporters heterodimers to the plasma membrane. Forms heterodimer with SLC7 family transporters (SLC7A5, SLC7A6, SLC7A7, SLC7A8, SLC7A10 and SLC7A11), a group of amino-acid antiporters. Heterodimers function as amino acids exchangers, the specificity of the substrate depending on the SLC7A subunit. Heterodimers SLC3A2/SLC7A6 or SLC3A2/SLC7A7 mediate the uptake of dibasic amino acids. Heterodimer SLC3A2/SLC7A11 functions as an antiporter by mediating the exchange of extracellular anionic L-cystine and intracellular L-glutamate across the cellular plasma membrane. SLC3A2/SLC7A10 translocates small neutral L- and D-amino acids across the plasma membrane. SLC3A2/SLC75 or SLC3A2/SLC7A8 translocates neutral amino acids with broad specificity, thyroid hormones and L-DOPA. SLC3A2 is essential for plasma membrane localization, stability, and the transport activity of SLC7A5 and SLC7A8. When associated with LAPTM4B, the heterodimer SLC7A5 is recruited to lysosomes to promote leucine uptake into these organelles, and thereby mediates mTORC1 activation. Modulates integrin-related signaling and is essential for integrin-dependent cell spreading, migration and tumor progression. This is Amino acid transporter heavy chain SLC3A2 from Mus musculus (Mouse).